The chain runs to 317 residues: Melanoma-associated antigen 4 (317 aa).

Residues 1-14 (MSSEQKSQHCKPEE) show a composition bias toward basic and acidic residues. The segment at 1 to 102 (MSSEQKSQHC…EEGPSTSPDA (102 aa)) is disordered. Over residues 66 to 82 (PQGASALPTTISFTCWR) the composition is skewed to polar residues. The MAGE domain occupies 110–309 (LSNKVDELAH…IAYPSLREAA (200 aa)).

As to expression, expressed in many tumors of several types, such as melanoma, head and neck squamous cell carcinoma, lung carcinoma and breast carcinoma, but not in normal tissues except for testes and placenta.

Functionally, regulates cell proliferation through the inhibition of cell cycle arrest at the G1 phase. Also negatively regulates p53-mediated apoptosis. This Homo sapiens (Human) protein is Melanoma-associated antigen 4 (MAGEA4).